The following is a 397-amino-acid chain: S-adenosylmethionine synthase (397 aa).

His15 lines the ATP pocket. A Mg(2+)-binding site is contributed by Asp17. Glu43 provides a ligand contact to K(+). 2 residues coordinate L-methionine: Glu56 and Gln99. Residues 99–109 form a flexible loop region; it reads QSPDIAQGVTA. Residues 173–175, 242–243, Asp251, 257–258, Ala274, and Lys278 each bind ATP; these read DGK, KF, and RK. Asp251 provides a ligand contact to L-methionine. L-methionine is bound at residue Lys282.

It belongs to the AdoMet synthase family. Homotetramer; dimer of dimers. Requires Mg(2+) as cofactor. The cofactor is K(+).

Its subcellular location is the cytoplasm. It catalyses the reaction L-methionine + ATP + H2O = S-adenosyl-L-methionine + phosphate + diphosphate. Its pathway is amino-acid biosynthesis; S-adenosyl-L-methionine biosynthesis; S-adenosyl-L-methionine from L-methionine: step 1/1. Functionally, catalyzes the formation of S-adenosylmethionine (AdoMet) from methionine and ATP. The overall synthetic reaction is composed of two sequential steps, AdoMet formation and the subsequent tripolyphosphate hydrolysis which occurs prior to release of AdoMet from the enzyme. The chain is S-adenosylmethionine synthase from Cutibacterium acnes (strain DSM 16379 / KPA171202) (Propionibacterium acnes).